The chain runs to 801 residues: Palmitoyl thioesterase CPT1C (801 aa).

Over 1–49 the chain is Cytoplasmic; that stretch reads MAEAHQASSLLSSLSSDGAEVELSSSVWQEIYLSALRSWKRNLWRVWND. A helical transmembrane segment spans residues 50-70; that stretch reads FLAGVVPATPLSWLFLFSTIQ. Over 71 to 103 the chain is Mitochondrial intermembrane; sequence LACLLQLDPSLGLMEKIKELLPDWGGQHHQLQG. A helical transmembrane segment spans residues 104–124; the sequence is LLAAAVFASCLWGTLIFTLHV. Over 125–801 the chain is Cytoplasmic; that stretch reads ALRLLLSHHG…PNIPKSSTNL (677 aa). The active-site Proton acceptor is the H469. 551–563 is a binding site for CoA; the sequence is GKSFIKGCHVSSD. Positions 585, 587, and 598 each coordinate (R)-carnitine. The required for interaction with GRIA1 stretch occupies residues 760–801; it reads LFQAGQQFKRQFTGLGESSGWKYSNLSCKTVDPNIPKSSTNL.

This sequence belongs to the carnitine/choline acetyltransferase family. Peripherally associated with AMPAR complex. AMPAR complex consists of an inner core made of 4 pore-forming GluA/GRIA proteins (GRIA1, GRIA2, GRIA3 and GRIA4) and 4 major auxiliary subunits arranged in a twofold symmetry. One of the two pairs of distinct binding sites is occupied either by CNIH2, CNIH3 or CACNG2, CACNG3. The other harbors CACNG2, CACNG3, CACNG4, CACNG8 or GSG1L. This inner core of AMPAR complex is complemented by outer core constituents binding directly to the GluA/GRIA proteins at sites distinct from the interaction sites of the inner core constituents. Outer core constituents include at least PRRT1, PRRT2, CKAMP44/SHISA9, FRRS1L and NRN1. The proteins of the inner and outer core serve as a platform for other, more peripherally associated AMPAR constituents, including CPT1C. Alone or in combination, these auxiliary subunits control the gating and pharmacology of the AMPAR complex and profoundly impact their biogenesis and protein processing. Interacts with SACM1L; the interaction regulates SACM1L phosphatidylinositol-3-phosphatase activity and translocation to endoplasmic reticulum/trans Golgi network in a malonyl-CoA dependent manner. Interacts with ATL1. As to expression, expressed in brain (at protein level).

The protein resides in the synapse. It localises to the cell projection. Its subcellular location is the dendrite. It is found in the axon. The protein localises to the endoplasmic reticulum membrane. The enzyme catalyses S-hexadecanoyl-L-cysteinyl-[protein] + H2O = L-cysteinyl-[protein] + hexadecanoate + H(+). Palmitoyl thioesterase specifically expressed in the endoplasmic reticulum of neurons. Modulates the trafficking of the glutamate receptor, AMPAR, to plasma membrane through depalmitoylation of GRIA1. Also regulates AMPR trafficking through the regulation of SACM1L phosphatidylinositol-3-phosphatase activity by interaction in a malonyl-CoA dependent manner. Binds malonyl-CoA and couples malonyl-CoA to ceramide levels, necessary for proper spine maturation and contributing to systemic energy homeostasis and appetite control. Binds to palmitoyl-CoA, but does not have carnitine palmitoyltransferase 1 catalytic activity or at very low levels. The protein is Palmitoyl thioesterase CPT1C (Cpt1c) of Rattus norvegicus (Rat).